Here is a 556-residue protein sequence, read N- to C-terminus: Formate--tetrahydrofolate ligase (556 aa).

Threonine 65 to threonine 72 provides a ligand contact to ATP.

Belongs to the formate--tetrahydrofolate ligase family.

The catalysed reaction is (6S)-5,6,7,8-tetrahydrofolate + formate + ATP = (6R)-10-formyltetrahydrofolate + ADP + phosphate. It participates in one-carbon metabolism; tetrahydrofolate interconversion. The sequence is that of Formate--tetrahydrofolate ligase from Clostridium cylindrosporum.